The following is a 387-amino-acid chain: MEQVVIVDAIRTPMGRSKGGAFRNVRAEDLSAHLMRSLLARNPALEAAALDDIYWGCVQQTLEQGFNIARNAALLAEVPHSVPAVTVNRLCGSSMQALHDAARMIMTGDAQACLVGGVEHMGHVPMSHGVDFHPGLSRNVAKAAGMMGLTTEMLARMHGISREMQDAFAARSHARAWAATQSGAFKNEIIPTGGHDADGVLKQFNYDEVIRPETTVEALATLRPAFDPVSGTVTAGTSSALSDGAAAMLVMSESRARELGLKPRARVRSMAVVGCDPSIMGYGPVPASKLALKKAGLSASDIGVFEMNEAFAAQILPCIKDLGLMEQIDEKINLNGGAIALGHPLGCSGARISTTLLNLMEHKDVQFGLATMCIGLGQGIATVFERV.

The active-site Acyl-thioester intermediate is Cys-91. Residues His-343 and Cys-373 each act as proton acceptor in the active site.

This sequence belongs to the thiolase-like superfamily. Thiolase family. Heterotetramer of two alpha chains (FadB) and two beta chains (FadA).

The protein localises to the cytoplasm. The catalysed reaction is an acyl-CoA + acetyl-CoA = a 3-oxoacyl-CoA + CoA. Its pathway is lipid metabolism; fatty acid beta-oxidation. Its function is as follows. Catalyzes the final step of fatty acid oxidation in which acetyl-CoA is released and the CoA ester of a fatty acid two carbons shorter is formed. The polypeptide is 3-ketoacyl-CoA thiolase (Escherichia coli (strain UTI89 / UPEC)).